Consider the following 440-residue polypeptide: tRNA-2-methylthio-N(6)-dimethylallyladenosine synthase (440 aa).

Positions 2–118 (PKYYIITYGC…LPKILESLDG (117 aa)) constitute an MTTase N-terminal domain. 6 residues coordinate [4Fe-4S] cluster: Cys-11, Cys-47, Cys-81, Cys-155, Cys-159, and Cys-162. Residues 141–370 (RENKFQAWIP…ENLQRKIIYE (230 aa)) enclose the Radical SAM core domain. The TRAM domain occupies 373-436 (LSRVGKEEIV…LWSLKGEVIR (64 aa)).

It belongs to the methylthiotransferase family. MiaB subfamily. In terms of assembly, monomer. The cofactor is [4Fe-4S] cluster.

It localises to the cytoplasm. The enzyme catalyses N(6)-dimethylallyladenosine(37) in tRNA + (sulfur carrier)-SH + AH2 + 2 S-adenosyl-L-methionine = 2-methylsulfanyl-N(6)-dimethylallyladenosine(37) in tRNA + (sulfur carrier)-H + 5'-deoxyadenosine + L-methionine + A + S-adenosyl-L-homocysteine + 2 H(+). Catalyzes the methylthiolation of N6-(dimethylallyl)adenosine (i(6)A), leading to the formation of 2-methylthio-N6-(dimethylallyl)adenosine (ms(2)i(6)A) at position 37 in tRNAs that read codons beginning with uridine. In Dictyoglomus thermophilum (strain ATCC 35947 / DSM 3960 / H-6-12), this protein is tRNA-2-methylthio-N(6)-dimethylallyladenosine synthase.